A 154-amino-acid chain; its full sequence is Ribonuclease 8 (154 aa).

The N-terminal stretch at 1-27 is a signal peptide; the sequence is MAPARAGCCALLLLLLGLWVAEIPVSA. The active-site Proton acceptor is H42. Cystine bridges form between C64–C118, C82–C133, and C89–C96. Substrate is bound by residues 65 to 69 and K90; that span reads KDLNT. The active-site Proton donor is H149.

The protein belongs to the pancreatic ribonuclease family.

The protein localises to the secreted. Its function is as follows. Has a low ribonuclease activity. This chain is Ribonuclease 8 (RNASE8), found in Pongo pygmaeus (Bornean orangutan).